Consider the following 223-residue polypeptide: Small ribosomal subunit protein uS3 (223 aa).

The region spanning 39–107 (IRQFLRKKPS…EVWLEIAEIK (69 aa)) is the KH type-2 domain.

Belongs to the universal ribosomal protein uS3 family. In terms of assembly, part of the 30S ribosomal subunit. Forms a tight complex with proteins S10 and S14.

Binds the lower part of the 30S subunit head. Binds mRNA in the 70S ribosome, positioning it for translation. The protein is Small ribosomal subunit protein uS3 of Chlamydia pneumoniae (Chlamydophila pneumoniae).